The following is a 206-amino-acid chain: Bacterial microcompartment protein trimer-3 (206 aa).

BMC circularly permuted domains are found at residues 2-104 and 105-206; these read ELRA…RLAP and RVVS…DNRG. The Pore gating residues motif lies at 67–68; it reads ER.

This sequence belongs to the EutL/PduB family. As to quaternary structure, homotrimerizes to form a pseudohexamer. These stack, with the concave faces together, with the concave faces together, in purified bacterial microcompartments (BMC).

The protein resides in the bacterial microcompartment. Functionally, a minor component of the bacterial microcompartment (BMC) shell. Expression of 5 proteins in E.coli (BMC-H (Hoch_5815), BMC-P (Hoch_5814), and 3 BMC-T (Hoch_5812, Hoch_5816, Hoch_3341)) forms 40 nm artificial BMCs with a molecular mass of 6.5 MDa. One of 2 stacked pseudohexamers in the BMC. There are 20 BMC-T pseudohexamers per BMC, composed of mixed BMC-T1, BMC-T2 and BMC-T3. The shell facets are 20-30 Angstroms thick, with 1 of the stacked BMC-T trimers protruding to the exterior. The stacked trimers may serve as conduits to allow metabolite flux across the protein shell, gated by Arg-68 which contacts Glu-67 in an adjacent subunit; they are flexible enough to play a role in accommodating variations in shell assembly. The polypeptide is Bacterial microcompartment protein trimer-3 (Haliangium ochraceum (strain DSM 14365 / JCM 11303 / SMP-2)).